Consider the following 757-residue polypeptide: Protein aardvark (757 aa).

Disordered regions lie at residues 39-63 (SSIN…DSNN), 122-166 (LEEN…SSIL), and 256-285 (SSNG…IESS). Residues 121–205 (ILEENNNNNN…FNQFNFLEGI (85 aa)) adopt a coiled-coil conformation. 2 stretches are compositionally biased toward low complexity: residues 125 to 164 (NNNN…SSSS) and 256 to 270 (SSNG…NNNN). An F-box domain is found at 310–356 (QFDIFLIPTEMLVHLLSFLSANDLWRISLTCKRIWYIVDVFKFWELL). ARM repeat units lie at residues 454-498 (GGIS…SNDN), 506-548 (GGIQ…VAIE), 549-591 (GGIQ…SAKE), 592-634 (GGIG…ISRQ), 635-678 (NGIQ…IARE), and 679-723 (GGIN…RSGG).

This sequence belongs to the beta-catenin family.

The protein resides in the cytoplasm. It is found in the cell junction. Its function is as follows. Required to regulate pattern formation during multi-cellular stages of development and for the formation of adherens junctions. Plays a structural role during the regulation of stalk formation. Involved in cell signaling. Required for spore-cell differentiation. Overexpression increases number and size of cell junctions and reduces spore-cell formation. This chain is Protein aardvark (aarA), found in Dictyostelium discoideum (Social amoeba).